The sequence spans 447 residues: UPF0328 protein ECU10_1870 (447 aa).

Basic and acidic residues-rich tracts occupy residues Met1 to Ser10 and His64 to Thr84. 2 disordered regions span residues Met1–Pro103 and Val147–Ile173. Residues Cys92–Pro103 are compositionally biased toward pro residues.

It belongs to the UPF0328 family.

The chain is UPF0328 protein ECU10_1870 from Encephalitozoon cuniculi (strain GB-M1) (Microsporidian parasite).